We begin with the raw amino-acid sequence, 236 residues long: Small ribosomal subunit protein uS2c (236 aa).

This sequence belongs to the universal ribosomal protein uS2 family.

It localises to the plastid. The chain is Small ribosomal subunit protein uS2c (rps2) from Cuscuta exaltata (Tall dodder).